The chain runs to 78 residues: Large ribosomal subunit protein uL29 (78 aa).

Belongs to the universal ribosomal protein uL29 family.

This Crocosphaera subtropica (strain ATCC 51142 / BH68) (Cyanothece sp. (strain ATCC 51142)) protein is Large ribosomal subunit protein uL29.